The chain runs to 688 residues: T-box transcription factor TBX2-A (688 aa).

Residues 104 to 277 constitute a DNA-binding region (T-box); that stretch reads LWDQFHKIGT…NNPFAKGFRD (174 aa). Disordered regions lie at residues 301 to 436 and 606 to 688; these read CKAD…GSLS and PSTN…ETPK. Composition is skewed to basic and acidic residues over residues 340–361, 378–403, and 412–430; these read NNREEKFGADSDQELDRREIRS, RLEDRGKDKSTPEKKSDSPESRKDGS, and SLEKDKAESRRKEDSKSDP. A compositionally biased stretch (low complexity) spans 621-636; sequence PGSESSKPGSSRESSP. Residues 655-679 are a coiled coil; the sequence is ASMKDSINELQNIQRLVSGLESQRE. A compositionally biased stretch (basic and acidic residues) spans 676 to 688; the sequence is SQREISPGRETPK.

In terms of assembly, binds DNA as a monomer.

Its subcellular location is the nucleus. In terms of biological role, transcription factor which acts as a transcriptional repressor. May also function as a transcriptional activator. Binds to the palindromic T site 5'-TTCACACCTAGGTGTGAA-3' DNA sequence, or a half-site, which are present in the regulatory region of several genes. This chain is T-box transcription factor TBX2-A (tbx2-a), found in Xenopus laevis (African clawed frog).